The sequence spans 130 residues: Small ribosomal subunit protein uS11 (130 aa).

Belongs to the universal ribosomal protein uS11 family. As to quaternary structure, part of the 30S ribosomal subunit. Interacts with proteins S7 and S18. Binds to IF-3.

Its function is as follows. Located on the platform of the 30S subunit, it bridges several disparate RNA helices of the 16S rRNA. Forms part of the Shine-Dalgarno cleft in the 70S ribosome. The sequence is that of Small ribosomal subunit protein uS11 from Prochlorococcus marinus (strain MIT 9303).